Consider the following 122-residue polypeptide: Nitrogen fixation nifHD region GlnB-like protein 2 (122 aa).

The protein belongs to the P(II) protein family.

In terms of biological role, could be involved in the regulation of nitrogen fixation. The sequence is that of Nitrogen fixation nifHD region GlnB-like protein 2 (glnBB) from Methanobacterium ivanovii.